The following is a 279-amino-acid chain: Tryptophan synthase alpha chain (279 aa).

Active-site proton acceptor residues include E50 and D61.

This sequence belongs to the TrpA family. As to quaternary structure, tetramer of two alpha and two beta chains.

The catalysed reaction is (1S,2R)-1-C-(indol-3-yl)glycerol 3-phosphate + L-serine = D-glyceraldehyde 3-phosphate + L-tryptophan + H2O. The protein operates within amino-acid biosynthesis; L-tryptophan biosynthesis; L-tryptophan from chorismate: step 5/5. The alpha subunit is responsible for the aldol cleavage of indoleglycerol phosphate to indole and glyceraldehyde 3-phosphate. In Methylobacterium radiotolerans (strain ATCC 27329 / DSM 1819 / JCM 2831 / NBRC 15690 / NCIMB 10815 / 0-1), this protein is Tryptophan synthase alpha chain.